The primary structure comprises 163 residues: Nucleotide-binding protein MS1759 (163 aa).

This sequence belongs to the YajQ family.

Its function is as follows. Nucleotide-binding protein. In Mannheimia succiniciproducens (strain KCTC 0769BP / MBEL55E), this protein is Nucleotide-binding protein MS1759.